Consider the following 86-residue polypeptide: NAD(P)H-quinone oxidoreductase subunit O (86 aa).

The protein belongs to the complex I NdhO subunit family. As to quaternary structure, NDH-1 can be composed of about 15 different subunits; different subcomplexes with different compositions have been identified which probably have different functions.

The protein localises to the cellular thylakoid membrane. The catalysed reaction is a plastoquinone + NADH + (n+1) H(+)(in) = a plastoquinol + NAD(+) + n H(+)(out). It catalyses the reaction a plastoquinone + NADPH + (n+1) H(+)(in) = a plastoquinol + NADP(+) + n H(+)(out). In terms of biological role, NDH-1 shuttles electrons from an unknown electron donor, via FMN and iron-sulfur (Fe-S) centers, to quinones in the respiratory and/or the photosynthetic chain. The immediate electron acceptor for the enzyme in this species is believed to be plastoquinone. Couples the redox reaction to proton translocation, and thus conserves the redox energy in a proton gradient. Cyanobacterial NDH-1 also plays a role in inorganic carbon-concentration. The sequence is that of NAD(P)H-quinone oxidoreductase subunit O from Prochlorococcus marinus (strain SARG / CCMP1375 / SS120).